We begin with the raw amino-acid sequence, 332 residues long: Transcription regulatory protein SNF6 (332 aa).

The Nuclear localization signal motif lies at 2 to 8 (GVIKKKR). Threonine 165 is modified (phosphothreonine). Positions 278 to 299 (VTTVASQSPHATATEKEPVPAV) are disordered.

As to quaternary structure, component of the SWI/SNF global transcription activator complex. The 1.14 MDa SWI/SNF complex is composed of 11 different subunits: one copy each of SWI1, SNF2/SWI2, SNF5, SNF12/SWP73, ARP7/SWP61, ARP9/SWP59; two copies each of SWI3, SNF6, SNF11, SWP82; and three copies of TAF14/SWP29.

Its subcellular location is the nucleus. Its function is as follows. Involved in transcriptional activation. Component of the SWI/SNF complex, an ATP-dependent chromatin remodeling complex, which is required for the positive and negative regulation of gene expression of a large number of genes. It changes chromatin structure by altering DNA-histone contacts within a nucleosome, leading eventually to a change in nucleosome position, thus facilitating or repressing binding of gene-specific transcription factors. The protein is Transcription regulatory protein SNF6 (SNF6) of Saccharomyces cerevisiae (strain ATCC 204508 / S288c) (Baker's yeast).